Reading from the N-terminus, the 416-residue chain is MPEHSDASLPPEERIRALVLKGTSVEVNDDIPPKRYYRSGVELIRMANVYSGEGSIENAFILYNKYITLFIEKLPKHRDYKTANVPEKKETLKKLKEIAFPKAEELKKELHKRYKKEYEEYSEKQRKEEEERARRLALQQQLDAEKQRVALLKQQQEQQEQVQAFEEMMRRKELEAERLRILHQFSKDEPEAEPLGSPLIPGMNEPPVTPLLPSYGTVQPHPPAVDRSLKPSSYGSNSSGVTSDGLRHVKIPRDVCCKFLQLSENNTQRGVETCGILCGKLLQNEFTVTHVIVPKQSGGPDYCNTESEEELFLIQDQQGLITLGWIHTHPTQTAFLSSVDLHTHCSYQMMLPESIAIVCSPKFQETGFFKLTDYGMKEIGECRQKGFHPHCKEPPLFSAGGHVSVTEQDVTMMDLR.

A disordered region spans residues 214–244 (SYGTVQPHPPAVDRSLKPSSYGSNSSGVTSD). Over residues 230–243 (KPSSYGSNSSGVTS) the composition is skewed to low complexity. The MPN domain occupies 249-380 (VKIPRDVCCK…LTDYGMKEIG (132 aa)). Zn(2+) is bound by residues histidine 327, histidine 329, aspartate 340, histidine 342, cysteine 382, histidine 388, and histidine 390. Residues 327–340 (HTHPTQTAFLSSVD) carry the JAMM motif motif.

It belongs to the peptidase M67C family. The cofactor is Zn(2+).

Functionally, zinc metalloprotease that specifically cleaves 'Lys-63'-linked polyubiquitin chains. Does not cleave 'Lys-48'-linked polyubiquitin chains. Functions at the endosome and is able to oppose the ubiquitin-dependent sorting of receptors to lysosomes. This chain is STAM-binding protein-like (stambp), found in Xenopus laevis (African clawed frog).